We begin with the raw amino-acid sequence, 79 residues long: Small ribosomal subunit protein uS17 (79 aa).

This sequence belongs to the universal ribosomal protein uS17 family. Part of the 30S ribosomal subunit.

Functionally, one of the primary rRNA binding proteins, it binds specifically to the 5'-end of 16S ribosomal RNA. This Rhizobium johnstonii (strain DSM 114642 / LMG 32736 / 3841) (Rhizobium leguminosarum bv. viciae) protein is Small ribosomal subunit protein uS17.